The primary structure comprises 446 residues: Rhoptry surface protein CERLI1 (446 aa).

Residues 39-208 form the C2 domain; the sequence is KPIGQLYRLM…NQTKNNEKIE (170 aa). One can recognise a PH domain in the interval 252-363; sequence GYLLHSNFYI…ILVSNYKRER (112 aa).

It localises to the cytoplasmic vesicle. The protein resides in the secretory vesicle. The protein localises to the rhoptry membrane. Essential for merozoite invasion of host cells by controlling rhoptry secretion. Binds to phosphatidic acid (PA) and phosphatidylinositol 4,5-bisphosphate (PIP2) lipids and thus, likely contributes to the assembly of the machinery that docks or primes the rhoptry to the parasite cell membrane prior to the fusion with the host cell membrane. This is Rhoptry surface protein CERLI1 from Plasmodium falciparum (isolate 3D7).